The primary structure comprises 156 residues: 6,7-dimethyl-8-ribityllumazine synthase (156 aa).

Residues Phe25, 59–61 (AFE), and 83–85 (AVI) each bind 5-amino-6-(D-ribitylamino)uracil. 88-89 (GT) lines the (2S)-2-hydroxy-3-oxobutyl phosphate pocket. His91 functions as the Proton donor in the catalytic mechanism. Residue Phe116 coordinates 5-amino-6-(D-ribitylamino)uracil. Residue Arg130 coordinates (2S)-2-hydroxy-3-oxobutyl phosphate.

It belongs to the DMRL synthase family.

It catalyses the reaction (2S)-2-hydroxy-3-oxobutyl phosphate + 5-amino-6-(D-ribitylamino)uracil = 6,7-dimethyl-8-(1-D-ribityl)lumazine + phosphate + 2 H2O + H(+). It participates in cofactor biosynthesis; riboflavin biosynthesis; riboflavin from 2-hydroxy-3-oxobutyl phosphate and 5-amino-6-(D-ribitylamino)uracil: step 1/2. Functionally, catalyzes the formation of 6,7-dimethyl-8-ribityllumazine by condensation of 5-amino-6-(D-ribitylamino)uracil with 3,4-dihydroxy-2-butanone 4-phosphate. This is the penultimate step in the biosynthesis of riboflavin. This is 6,7-dimethyl-8-ribityllumazine synthase from Desulfovibrio desulfuricans (strain ATCC 27774 / DSM 6949 / MB).